The sequence spans 157 residues: Heat shock protein beta-9 (157 aa).

The span at 1–17 (MQRVGSSLPSGSQSASQ) shows a compositional bias: low complexity. 2 disordered regions span residues 1 to 20 (MQRV…QCPS) and 136 to 157 (PPSE…KKLA). The 114-residue stretch at 35 to 148 (QRLTEDAAAV…EAQTGPASRF (114 aa)) folds into the sHSP domain. Over residues 148 to 157 (FRSRGSKKLA) the composition is skewed to basic residues.

This sequence belongs to the small heat shock protein (HSP20) family.

The protein resides in the cytoplasm. Its subcellular location is the nucleus. The chain is Heat shock protein beta-9 (HSPB9) from Bos taurus (Bovine).